Reading from the N-terminus, the 354-residue chain is UPF0283 membrane protein CGSHiGG_02710 (354 aa).

Transmembrane regions (helical) follow at residues 57 to 77 (LLKF…VQWI), 87 to 107 (IYLA…KEII), and 211 to 231 (ESAV…FIAW).

Belongs to the UPF0283 family.

It is found in the cell inner membrane. The sequence is that of UPF0283 membrane protein CGSHiGG_02710 from Haemophilus influenzae (strain PittGG).